The chain runs to 284 residues: Trimeric intracellular cation channel type B (284 aa).

Residues 1-15 (MESFSELSLQFSQLS) are Lumenal-facing. A helical membrane pass occupies residues 16–32 (MFPFFETAHYLTSVMSA). The Cytoplasmic segment spans residues 33–44 (REQAGAVDVASR). Residues 45-68 (SPLASWFSSMLYCFGGGILSSILL) form a helical membrane-spanning segment. Topologically, residues 69–79 (AEPPVGILSNT) are lumenal. The helical transmembrane segment at 80 to 99 (TSIILASAVWYMVYYFPYDL) threads the bilayer. At 100–102 (FYN) the chain is on the cytoplasmic side. Residues 103–121 (CFFFLPIRLILAGMKEVTR) form a helical membrane-spanning segment. Lys-117 and Arg-121 together coordinate a 1,2-diacyl-sn-glycero-3-phospho-(1D-myo-inositol-4,5-bisphosphate). Over 122–139 (TWKILSGVAHAHSHYKDA) the chain is Lumenal. Residues 140 to 157 (MLVMITIGWARGAGGGLI) traverse the membrane as a helical segment. Over 158–178 (SNFEQLVRGVWKPESNEFLKM) the chain is Cytoplasmic. Residues 179–196 (SYPVKVTLIGAVLFTLQH) traverse the membrane as a helical segment. Residues 197 to 204 (GQYLPISR) lie on the Lumenal side of the membrane. A helical transmembrane segment spans residues 205 to 225 (HNLMFIYTLFLILIKVTMMLT). Topologically, residues 226–284 (RSTASPFLPLETSLQHILFSRQQIPAEVRESPSSSGDKGKPSKKTLDKDSGEQDNKKDN) are cytoplasmic. The interval 250–284 (PAEVRESPSSSGDKGKPSKKTLDKDSGEQDNKKDN) is disordered. Residues 262 to 284 (DKGKPSKKTLDKDSGEQDNKKDN) show a composition bias toward basic and acidic residues.

It belongs to the TMEM38 family. Homotrimer; conformation seems to be controled by binding to diacylglycerol (DAG).

It is found in the endoplasmic reticulum membrane. The enzyme catalyses K(+)(in) = K(+)(out). Its activity is regulated as follows. Channel activity is activated by increased cytosolic Ca(2+) levels and blocked by luminal high Ca(2+) levels. Its function is as follows. Intracellular monovalent cation channel required for maintenance of rapid intracellular calcium release. Acts as a potassium counter-ion channel that functions in synchronization with calcium release from intracellular stores. Activated by increased cytosolic Ca(2+) levels. In Xenopus tropicalis (Western clawed frog), this protein is Trimeric intracellular cation channel type B (tmem38b).